The chain runs to 202 residues: Holliday junction branch migration complex subunit RuvA (202 aa).

Positions 1 to 63 (MIASLRGTVL…EDSMTLYGFT (63 aa)) are domain I. A domain II region spans residues 64–142 (SQDDRDMFHV…AFAPAESADL (79 aa)). Residues 143–148 (SSAAPA) are flexible linker. A domain III region spans residues 149 to 202 (AAGPVVEDVVEALIGLGFTDKMARPVVESVVAEQPDAATPVVLRAALSQLGAKK).

Belongs to the RuvA family. As to quaternary structure, homotetramer. Forms an RuvA(8)-RuvB(12)-Holliday junction (HJ) complex. HJ DNA is sandwiched between 2 RuvA tetramers; dsDNA enters through RuvA and exits via RuvB. An RuvB hexamer assembles on each DNA strand where it exits the tetramer. Each RuvB hexamer is contacted by two RuvA subunits (via domain III) on 2 adjacent RuvB subunits; this complex drives branch migration. In the full resolvosome a probable DNA-RuvA(4)-RuvB(12)-RuvC(2) complex forms which resolves the HJ.

The protein localises to the cytoplasm. Functionally, the RuvA-RuvB-RuvC complex processes Holliday junction (HJ) DNA during genetic recombination and DNA repair, while the RuvA-RuvB complex plays an important role in the rescue of blocked DNA replication forks via replication fork reversal (RFR). RuvA specifically binds to HJ cruciform DNA, conferring on it an open structure. The RuvB hexamer acts as an ATP-dependent pump, pulling dsDNA into and through the RuvAB complex. HJ branch migration allows RuvC to scan DNA until it finds its consensus sequence, where it cleaves and resolves the cruciform DNA. The sequence is that of Holliday junction branch migration complex subunit RuvA from Corynebacterium aurimucosum (strain ATCC 700975 / DSM 44827 / CIP 107346 / CN-1) (Corynebacterium nigricans).